The following is a 303-amino-acid chain: Carboxypeptidase B (303 aa).

Residues 5–298 (SYHDYDEINA…EGVKVVANFV (294 aa)) enclose the Peptidase M14 domain. Zn(2+) contacts are provided by His63 and Glu66. Substrate contacts are provided by residues 63–66 (HARE), Arg118, and 136–137 (NR). His189 is a binding site for Zn(2+). Substrate is bound by residues 190–191 (SY) and Tyr241. Glu264 acts as the Proton donor/acceptor in catalysis.

It belongs to the peptidase M14 family. The cofactor is Zn(2+).

The protein resides in the secreted. The catalysed reaction is Preferential release of a C-terminal lysine or arginine amino acid.. This Astacus astacus (Noble crayfish) protein is Carboxypeptidase B.